Consider the following 335-residue polypeptide: Serpentine receptor class gamma-11 (335 aa).

Helical transmembrane passes span 33–53 (FLQIAYLIPGGILNILLLYTI), 66–86 (FFLIYSTDCFVSFSMIFLDII), 98–118 (PIIAPMFYEPLIGFKIMMIVL), 154–174 (LKYLIILVFVIPFSIDWNLII), 202–222 (FQLIFITIALLFTIVCTSVIF), 242–262 (GTAYISMSFIILVVFQFLFAF), and 271–291 (TIFGYSLLSYDILNVGSPIIM).

Belongs to the nematode receptor-like protein srg family.

The protein resides in the membrane. This chain is Serpentine receptor class gamma-11 (srg-11), found in Caenorhabditis elegans.